The sequence spans 231 residues: Uracil-DNA glycosylase (231 aa).

D71 (proton acceptor) is an active-site residue.

Belongs to the uracil-DNA glycosylase (UDG) superfamily. UNG family.

Its subcellular location is the cytoplasm. The enzyme catalyses Hydrolyzes single-stranded DNA or mismatched double-stranded DNA and polynucleotides, releasing free uracil.. Functionally, excises uracil residues from the DNA which can arise as a result of misincorporation of dUMP residues by DNA polymerase or due to deamination of cytosine. The protein is Uracil-DNA glycosylase of Pseudomonas aeruginosa (strain ATCC 15692 / DSM 22644 / CIP 104116 / JCM 14847 / LMG 12228 / 1C / PRS 101 / PAO1).